Here is a 571-residue protein sequence, read N- to C-terminus: MVNNILKAPEGPPSDVEEIKEKSDYLRGTLKEVMLDRISAGIPDDDNRLMKHHGSYLQDDRDLRNERQKQKLEPAYQFMLRVRMPGGVSTPEQWLVMDELAQKYGNNTLKLTTRETFQMHGILKWNMKKTIQKINAALLDTIAACGDVNRNVMCASNPHQSEIHAEVYEWSKKLSDDLLPRTRAYHEIWLDEERVAGTPDTETEPMYGPLYLPRKFKIGIAVPPSNDIDVYSQDLGFIAIVEEGRLIGFNVAIGGGMGMTHGDTATYPQLSKVIGFCKPEQLYDVAEKTITIQRDYGNRSVRKNARFKYTVDRLGLENVKAELENRLGWQLDEAKPYHFDHNGDRYGWVKGVKGKWHFTMFIEGGRVTDYENYKLMTGLREIAKVHTGDFRLTSNQNLIIGNVSSQKKKQISALIEQYGLTDGRQHSALRRSSMACVALPTCGLAMAEAERYLPKLIDKIEDIVDENGLRDEEITIRMTGCPNGCARHALGEIGFIGKAPGKYNMYLGAAFDGSRLSKMYRENIGEEEILSELRTILPRYAKEREEGEHFGDFVIRAGIIKATTDGTNFHE.

Residues Cys-436, Cys-442, Cys-481, and Cys-485 each coordinate [4Fe-4S] cluster. Cys-485 is a binding site for siroheme.

Belongs to the nitrite and sulfite reductase 4Fe-4S domain family. In terms of assembly, alpha(8)-beta(8). The alpha component is a flavoprotein, the beta component is a hemoprotein. It depends on siroheme as a cofactor. [4Fe-4S] cluster serves as cofactor.

It catalyses the reaction hydrogen sulfide + 3 NADP(+) + 3 H2O = sulfite + 3 NADPH + 4 H(+). It functions in the pathway sulfur metabolism; hydrogen sulfide biosynthesis; hydrogen sulfide from sulfite (NADPH route): step 1/1. In terms of biological role, component of the sulfite reductase complex that catalyzes the 6-electron reduction of sulfite to sulfide. This is one of several activities required for the biosynthesis of L-cysteine from sulfate. This chain is Sulfite reductase [NADPH] hemoprotein beta-component, found in Bacillus velezensis (strain DSM 23117 / BGSC 10A6 / LMG 26770 / FZB42) (Bacillus amyloliquefaciens subsp. plantarum).